A 77-amino-acid polypeptide reads, in one-letter code: MSLFDFFKNKGSAATATDRLKLILAKERTLNLPYMEEMRKEIIAVIQKYTKSSDIHFKTIDGNQSVETIEVEIILPK.

The protein belongs to the MinE family.

Functionally, prevents the cell division inhibition by proteins MinC and MinD at internal division sites while permitting inhibition at polar sites. This ensures cell division at the proper site by restricting the formation of a division septum at the midpoint of the long axis of the cell. The polypeptide is Cell division topological specificity factor (Helicobacter pylori (strain Shi470)).